The following is a 342-amino-acid chain: N-acetyl-gamma-glutamyl-phosphate reductase (342 aa).

Cys149 is a catalytic residue.

It belongs to the NAGSA dehydrogenase family. Type 1 subfamily.

Its subcellular location is the cytoplasm. It catalyses the reaction N-acetyl-L-glutamate 5-semialdehyde + phosphate + NADP(+) = N-acetyl-L-glutamyl 5-phosphate + NADPH + H(+). The protein operates within amino-acid biosynthesis; L-arginine biosynthesis; N(2)-acetyl-L-ornithine from L-glutamate: step 3/4. Its function is as follows. Catalyzes the NADPH-dependent reduction of N-acetyl-5-glutamyl phosphate to yield N-acetyl-L-glutamate 5-semialdehyde. The sequence is that of N-acetyl-gamma-glutamyl-phosphate reductase from Cereibacter sphaeroides (strain ATCC 17023 / DSM 158 / JCM 6121 / CCUG 31486 / LMG 2827 / NBRC 12203 / NCIMB 8253 / ATH 2.4.1.) (Rhodobacter sphaeroides).